Here is a 155-residue protein sequence, read N- to C-terminus: Egg cell-secreted protein 1.5 (155 aa).

A signal peptide spans 1–32; it reads MATKSTSKPLLLSFLMMSYLISTFHVITVAEG.

It belongs to the plant egg cell-secreted peptide family. In terms of tissue distribution, restricted to female reproductive tissues, specifically accumulating in storage vesicles of the unfertilized egg cell.

The protein resides in the cytoplasmic vesicle. It is found in the secreted. In terms of biological role, involved in the regulation of gamete interactions during the double fertilization and to prevent multiple-pollen tube attraction; mediates the redistribution of the gamete fusogen HAP2/GCS1 to the cell surface after secretion upon sperm arrival. The sequence is that of Egg cell-secreted protein 1.5 (EC1.5) from Arabidopsis thaliana (Mouse-ear cress).